A 425-amino-acid polypeptide reads, in one-letter code: Serine--tRNA ligase (425 aa).

233–235 is an L-serine binding site; that stretch reads TAE. Residue 264-266 coordinates ATP; that stretch reads RRE. Position 287 (E287) interacts with L-serine. 351–354 contacts ATP; sequence EISS. S387 provides a ligand contact to L-serine.

This sequence belongs to the class-II aminoacyl-tRNA synthetase family. Type-1 seryl-tRNA synthetase subfamily. Homodimer. The tRNA molecule binds across the dimer.

It is found in the cytoplasm. It carries out the reaction tRNA(Ser) + L-serine + ATP = L-seryl-tRNA(Ser) + AMP + diphosphate + H(+). The enzyme catalyses tRNA(Sec) + L-serine + ATP = L-seryl-tRNA(Sec) + AMP + diphosphate + H(+). It functions in the pathway aminoacyl-tRNA biosynthesis; selenocysteinyl-tRNA(Sec) biosynthesis; L-seryl-tRNA(Sec) from L-serine and tRNA(Sec): step 1/1. In terms of biological role, catalyzes the attachment of serine to tRNA(Ser). Is also able to aminoacylate tRNA(Sec) with serine, to form the misacylated tRNA L-seryl-tRNA(Sec), which will be further converted into selenocysteinyl-tRNA(Sec). The sequence is that of Serine--tRNA ligase from Thermotoga sp. (strain RQ2).